The chain runs to 275 residues: MIELTDEILAKVIKKRKKASYKGTYGRLLVIGGNRQYGGAAILVTTSAVYSGAGLVSVALAKENHSALQARLPEAMTLDFDDLIKLREVAKAADVIVIGPGLGLERLDLLTEVLNLLTENQKLVIDGSALTLFAREHLDLPFPENTVFTPHEMELERLSGLKIGQQTKEEVQDFVNQLGAIVVAKSSETRIFAPNRESFILKIGSPAQATGGMGDTLAGMVGGFLAQFHGETEEVVAAATYLHSLIASVLARKTYVVLPSRLIEEIPLFMKKYEC.

The YjeF C-terminal domain maps to 5–273 (TDEILAKVIK…EEIPLFMKKY (269 aa)). Positions 40, 103, and 151 each coordinate (6S)-NADPHX. Gly-214 lines the AMP pocket. Asp-215 contributes to the (6S)-NADPHX binding site.

Belongs to the NnrD/CARKD family. In terms of assembly, homotetramer. Requires Mg(2+) as cofactor.

It catalyses the reaction (6S)-NADHX + ADP = AMP + phosphate + NADH + H(+). It carries out the reaction (6S)-NADPHX + ADP = AMP + phosphate + NADPH + H(+). In terms of biological role, catalyzes the dehydration of the S-form of NAD(P)HX at the expense of ADP, which is converted to AMP. Together with NAD(P)HX epimerase, which catalyzes the epimerization of the S- and R-forms, the enzyme allows the repair of both epimers of NAD(P)HX, a damaged form of NAD(P)H that is a result of enzymatic or heat-dependent hydration. The polypeptide is ADP-dependent (S)-NAD(P)H-hydrate dehydratase (Lactococcus lactis subsp. lactis (strain IL1403) (Streptococcus lactis)).